The sequence spans 318 residues: Acetyl-coenzyme A carboxylase carboxyl transferase subunit alpha (318 aa).

In terms of domain architecture, CoA carboxyltransferase C-terminal spans 34-295 (DIEDQISQLR…KQAIKKDLSE (262 aa)).

This sequence belongs to the AccA family. Acetyl-CoA carboxylase is a heterohexamer composed of biotin carboxyl carrier protein (AccB), biotin carboxylase (AccC) and two subunits each of ACCase subunit alpha (AccA) and ACCase subunit beta (AccD).

It localises to the cytoplasm. It carries out the reaction N(6)-carboxybiotinyl-L-lysyl-[protein] + acetyl-CoA = N(6)-biotinyl-L-lysyl-[protein] + malonyl-CoA. It functions in the pathway lipid metabolism; malonyl-CoA biosynthesis; malonyl-CoA from acetyl-CoA: step 1/1. In terms of biological role, component of the acetyl coenzyme A carboxylase (ACC) complex. First, biotin carboxylase catalyzes the carboxylation of biotin on its carrier protein (BCCP) and then the CO(2) group is transferred by the carboxyltransferase to acetyl-CoA to form malonyl-CoA. The chain is Acetyl-coenzyme A carboxylase carboxyl transferase subunit alpha from Colwellia psychrerythraea (strain 34H / ATCC BAA-681) (Vibrio psychroerythus).